The following is a 540-amino-acid chain: Chaperonin GroEL (540 aa).

Residues 30–33 (TLGP), 87–91 (DGTTT), Gly-414, 479–481 (NAL), and Asp-495 each bind ATP.

It belongs to the chaperonin (HSP60) family. Forms a cylinder of 14 subunits composed of two heptameric rings stacked back-to-back. Interacts with the co-chaperonin GroES.

It is found in the cytoplasm. It carries out the reaction ATP + H2O + a folded polypeptide = ADP + phosphate + an unfolded polypeptide.. In terms of biological role, together with its co-chaperonin GroES, plays an essential role in assisting protein folding. The GroEL-GroES system forms a nano-cage that allows encapsulation of the non-native substrate proteins and provides a physical environment optimized to promote and accelerate protein folding. The polypeptide is Chaperonin GroEL (Rubrobacter xylanophilus (strain DSM 9941 / JCM 11954 / NBRC 16129 / PRD-1)).